The following is a 163-amino-acid chain: ATP synthase subunit b' (163 aa).

Residues 28-45 (LMAIQFLLLALILNATLY) traverse the membrane as a helical segment.

This sequence belongs to the ATPase B chain family. In terms of assembly, F-type ATPases have 2 components, F(1) - the catalytic core - and F(0) - the membrane proton channel. F(1) has five subunits: alpha(3), beta(3), gamma(1), delta(1), epsilon(1). F(0) has four main subunits: a(1), b(1), b'(1) and c(10-14). The alpha and beta chains form an alternating ring which encloses part of the gamma chain. F(1) is attached to F(0) by a central stalk formed by the gamma and epsilon chains, while a peripheral stalk is formed by the delta, b and b' chains.

Its subcellular location is the cellular thylakoid membrane. Functionally, f(1)F(0) ATP synthase produces ATP from ADP in the presence of a proton or sodium gradient. F-type ATPases consist of two structural domains, F(1) containing the extramembraneous catalytic core and F(0) containing the membrane proton channel, linked together by a central stalk and a peripheral stalk. During catalysis, ATP synthesis in the catalytic domain of F(1) is coupled via a rotary mechanism of the central stalk subunits to proton translocation. Component of the F(0) channel, it forms part of the peripheral stalk, linking F(1) to F(0). The b'-subunit is a diverged and duplicated form of b found in plants and photosynthetic bacteria. The protein is ATP synthase subunit b' of Nostoc sp. (strain PCC 7120 / SAG 25.82 / UTEX 2576).